A 243-amino-acid polypeptide reads, in one-letter code: TIGR03089 family protein (243 aa).

Belongs to the TIGR03089 family.

The protein is TIGR03089 family protein of Mycobacterium tuberculosis (strain ATCC 25618 / H37Rv).